A 459-amino-acid chain; its full sequence is Ribulose bisphosphate carboxylase large chain (459 aa).

An N6,N6,N6-trimethyllysine modification is found at Lys4. Substrate-binding residues include Asn113 and Thr163. Lys165 functions as the Proton acceptor in the catalytic mechanism. Lys167 is a substrate binding site. 3 residues coordinate Mg(2+): Lys191, Asp193, and Glu194. At Lys191 the chain carries N6-carboxylysine. His284 functions as the Proton acceptor in the catalytic mechanism. Substrate contacts are provided by Arg285, His317, and Ser369.

This sequence belongs to the RuBisCO large chain family. Type I subfamily. Heterohexadecamer of 8 large chains and 8 small chains; disulfide-linked. The disulfide link is formed within the large subunit homodimers. Requires Mg(2+) as cofactor. Post-translationally, the disulfide bond which can form in the large chain dimeric partners within the hexadecamer appears to be associated with oxidative stress and protein turnover.

It localises to the plastid. The protein localises to the chloroplast. The enzyme catalyses 2 (2R)-3-phosphoglycerate + 2 H(+) = D-ribulose 1,5-bisphosphate + CO2 + H2O. It carries out the reaction D-ribulose 1,5-bisphosphate + O2 = 2-phosphoglycolate + (2R)-3-phosphoglycerate + 2 H(+). Its function is as follows. RuBisCO catalyzes two reactions: the carboxylation of D-ribulose 1,5-bisphosphate, the primary event in carbon dioxide fixation, as well as the oxidative fragmentation of the pentose substrate in the photorespiration process. Both reactions occur simultaneously and in competition at the same active site. The polypeptide is Ribulose bisphosphate carboxylase large chain (Heuchera micrantha (Alum root)).